The primary structure comprises 101 residues: NAD(P)H-quinone oxidoreductase subunit 4L, chloroplastic (101 aa).

3 helical membrane passes run 2-22 (MLEHVLVLGAYLFSIGIYGLI), 32-52 (MCLELILNAVNINLVTFSDFF), and 61-81 (ILSIFVIAIAAAEAAIGLAIV).

The protein belongs to the complex I subunit 4L family. NDH is composed of at least 16 different subunits, 5 of which are encoded in the nucleus.

The protein resides in the plastid. It is found in the chloroplast thylakoid membrane. It carries out the reaction a plastoquinone + NADH + (n+1) H(+)(in) = a plastoquinol + NAD(+) + n H(+)(out). It catalyses the reaction a plastoquinone + NADPH + (n+1) H(+)(in) = a plastoquinol + NADP(+) + n H(+)(out). NDH shuttles electrons from NAD(P)H:plastoquinone, via FMN and iron-sulfur (Fe-S) centers, to quinones in the photosynthetic chain and possibly in a chloroplast respiratory chain. The immediate electron acceptor for the enzyme in this species is believed to be plastoquinone. Couples the redox reaction to proton translocation, and thus conserves the redox energy in a proton gradient. This chain is NAD(P)H-quinone oxidoreductase subunit 4L, chloroplastic, found in Buxus microphylla (Littleleaf boxwood).